Reading from the N-terminus, the 423-residue chain is Glucose-1-phosphate adenylyltransferase (423 aa).

Residues tyrosine 98, glycine 163, 178–179 (EK), and serine 189 contribute to the alpha-D-glucose 1-phosphate site.

This sequence belongs to the bacterial/plant glucose-1-phosphate adenylyltransferase family. Homotetramer.

It carries out the reaction alpha-D-glucose 1-phosphate + ATP + H(+) = ADP-alpha-D-glucose + diphosphate. It participates in glycan biosynthesis; glycogen biosynthesis. Involved in the biosynthesis of ADP-glucose, a building block required for the elongation reactions to produce glycogen. Catalyzes the reaction between ATP and alpha-D-glucose 1-phosphate (G1P) to produce pyrophosphate and ADP-Glc. The polypeptide is Glucose-1-phosphate adenylyltransferase (Thermotoga neapolitana (strain ATCC 49049 / DSM 4359 / NBRC 107923 / NS-E)).